The sequence spans 1235 residues: Major DNA-binding protein (1235 aa).

The segment at 536-584 (GGLDGKGDDGVPGGGAGGGGGRDVSGGPSDGLGGGRGGGGGGDSGGMMG) is disordered. Over residues 545 to 584 (GVPGGGAGGGGGRDVSGGPSDGLGGGRGGGGGGDSGGMMG) the composition is skewed to gly residues. A Required for filament formation motif is present at residues 846–847 (FW). The span at 1214-1226 (GVGGSSGGGGGSG) shows a compositional bias: gly residues. Residues 1214–1235 (GVGGSSGGGGGSGLLPAKRSRL) form a disordered region. The required for nuclear localization stretch occupies residues 1232-1235 (RSRL).

It belongs to the herpesviridae major DNA-binding protein family. Homooligomers. Forms double-helical filaments necessary for the formation of replication compartments within the host nucleus. Interacts with the origin-binding protein. Interacts with the helicase primase complex; this interaction stimulates primer synthesis activity of the helicase-primase complex. Interacts with the DNA polymerase. Interacts with the alkaline exonuclease; this interaction increases its nuclease processivity.

The protein localises to the host nucleus. In terms of biological role, plays several crucial roles in viral infection. Participates in the opening of the viral DNA origin to initiate replication by interacting with the origin-binding protein. May disrupt loops, hairpins and other secondary structures present on ssDNA to reduce and eliminate pausing of viral DNA polymerase at specific sites during elongation. Promotes viral DNA recombination by performing strand-transfer, characterized by the ability to transfer a DNA strand from a linear duplex to a complementary single-stranded DNA circle. Can also catalyze the renaturation of complementary single strands. Additionally, reorganizes the host cell nucleus, leading to the formation of prereplicative sites and replication compartments. This process is driven by the protein which can form double-helical filaments in the absence of DNA. The protein is Major DNA-binding protein of Homo sapiens (Human).